We begin with the raw amino-acid sequence, 392 residues long: uncharacterized protein (392 aa).

Belongs to the hcp1 family.

This is an uncharacterized protein from Escherichia coli (strain K12).